Consider the following 265-residue polypeptide: Proteasome subunit alpha (265 aa).

Residues 236–265 (EKDSKGSKGAQNPKGARDSKNSKSYGESTD) form a disordered region.

The protein belongs to the peptidase T1A family. In terms of assembly, the 20S proteasome core is composed of 14 alpha and 14 beta subunits that assemble into four stacked heptameric rings, resulting in a barrel-shaped structure. The two inner rings, each composed of seven catalytic beta subunits, are sandwiched by two outer rings, each composed of seven alpha subunits. The catalytic chamber with the active sites is on the inside of the barrel. Has a gated structure, the ends of the cylinder being occluded by the N-termini of the alpha-subunits. Is capped by the proteasome-associated ATPase, ARC.

Its subcellular location is the cytoplasm. The protein operates within protein degradation; proteasomal Pup-dependent pathway. With respect to regulation, the formation of the proteasomal ATPase ARC-20S proteasome complex, likely via the docking of the C-termini of ARC into the intersubunit pockets in the alpha-rings, may trigger opening of the gate for substrate entry. Interconversion between the open-gate and close-gate conformations leads to a dynamic regulation of the 20S proteasome proteolysis activity. In terms of biological role, component of the proteasome core, a large protease complex with broad specificity involved in protein degradation. In Mycobacterium leprae (strain Br4923), this protein is Proteasome subunit alpha.